Here is a 403-residue protein sequence, read N- to C-terminus: Tryptophan synthase beta chain (403 aa).

K90 carries the post-translational modification N6-(pyridoxal phosphate)lysine.

The protein belongs to the TrpB family. As to quaternary structure, tetramer of two alpha and two beta chains. Pyridoxal 5'-phosphate is required as a cofactor.

The enzyme catalyses (1S,2R)-1-C-(indol-3-yl)glycerol 3-phosphate + L-serine = D-glyceraldehyde 3-phosphate + L-tryptophan + H2O. It participates in amino-acid biosynthesis; L-tryptophan biosynthesis; L-tryptophan from chorismate: step 5/5. In terms of biological role, the beta subunit is responsible for the synthesis of L-tryptophan from indole and L-serine. This is Tryptophan synthase beta chain from Leifsonia xyli subsp. xyli (strain CTCB07).